The following is a 317-amino-acid chain: Ataxin-3 homolog (317 aa).

A Josephin domain is found at 7 to 178 (INSIFFEHQE…RSDADDLISL (172 aa)). C20 functions as the Nucleophile in the catalytic mechanism. The Proton acceptor role is filled by H117. N132 is a catalytic residue. 2 UIM domains span residues 219 to 239 (SQEE…KDGS) and 247 to 264 (EIDE…QAPG). The interval 254–317 (RKAIELSQAP…KKKEERNDEK (64 aa)) is disordered. Residues 276-293 (RSRSSTPPGASEPFSNAE) show a composition bias toward polar residues. A compositionally biased stretch (basic and acidic residues) spans 294-317 (QQRRDRQKFLERFEKKKEERNDEK). Residues 296-299 (RRDR) are interaction with cdc-48.1 and cdc-48.2.

Forms a complex composed of deubiquitinating enzyme atx-3, adapter ubxn-5 and cdc-48.1. Forms a complex composed of deubiquitinating enzyme atx-3, E4 ubiquitin-protein ligase ufd-2 and cdc-48.1. Interacts (via RRDR motif) with cdc-48.1 (via N-terminus) and cdc-48.2 (via N-terminus); the interaction with cdc-48.1 is not required for atx-3 enzymatic activity. Interacts (via C-terminus) with ubxn-5. May interact with ned-8. Expressed in germline (at protein level). Expressed in spermatheca, pharynx, dorsal and ventral cords, some head neurons, hypodermis, body wall muscles and coelomocytes.

Its subcellular location is the cytoplasm. The protein localises to the nucleus. It is found in the nucleolus. The enzyme catalyses Thiol-dependent hydrolysis of ester, thioester, amide, peptide and isopeptide bonds formed by the C-terminal Gly of ubiquitin (a 76-residue protein attached to proteins as an intracellular targeting signal).. Acts as a chain editing deubiquitinating enzyme that binds and cleaves 'Lys-48'-linked polyubiquitin chains, with a preference for chains containing four or more ubiquitin molecules thereby modulating protein degradation by the ubiquitin-proteasome pathway. Probably by regulating the IGF-1-insulin-like pathway, regulates lifespan. Regulates germline DNA double-strand-break repair and apoptosis in response to DNA damage by recruiting E4 ubiquitin-protein ligase ufd-2 to DNA repair foci. Interacts with key regulators of transcription and represses transcription. Acts as a histone-binding protein that regulates transcription. The chain is Ataxin-3 homolog (atx-3) from Caenorhabditis elegans.